Consider the following 365-residue polypeptide: Nudix hydrolase 24, chloroplastic (365 aa).

The transit peptide at methionine 1–serine 30 directs the protein to the chloroplast. The 142-residue stretch at glycine 196–aspartate 337 folds into the Nudix hydrolase domain. The Nudix box signature appears at glycine 235 to glycine 256. Mg(2+)-binding residues include glutamate 250 and glutamate 254.

It belongs to the Nudix hydrolase family. It depends on Mg(2+) as a cofactor. Mn(2+) serves as cofactor. Expressed in leaves.

It is found in the plastid. It localises to the chloroplast. Functionally, probably mediates the hydrolysis of some nucleoside diphosphate derivatives. In Arabidopsis thaliana (Mouse-ear cress), this protein is Nudix hydrolase 24, chloroplastic (NUDT24).